A 328-amino-acid chain; its full sequence is Probable fused nickel transport protein LarMN (328 aa).

8 helical membrane-spanning segments follow: residues 8-28 (LSPA…TVAV), 42-62 (LPML…NLPI), 75-95 (LLAV…TLLL), 103-123 (GGIL…PFVG), 138-158 (LGLA…AGIE), 187-207 (MLTA…LLVF), 229-249 (PWIA…LASN), and 296-316 (PVSV…LLLI).

It belongs to the CbiM family. NikM subfamily. In terms of assembly, may form an energy-coupling factor (ECF) transporter complex composed of an ATP-binding protein (A component, LarO), a transmembrane protein (T component, LarQ) and a fused possible substrate-capture protein (S component, LarMN) of unknown stoichiometry.

It localises to the cell membrane. Probably part of the energy-coupling factor (ECF) transporter complex LarMNQO involved in nickel import. The sequence is that of Probable fused nickel transport protein LarMN from Lactiplantibacillus plantarum (strain ATCC BAA-793 / NCIMB 8826 / WCFS1) (Lactobacillus plantarum).